The sequence spans 630 residues: Altered inheritance of mitochondria protein 9, mitochondrial (630 aa).

The transit peptide at 1-40 directs the protein to the mitochondrion; the sequence is MLKLTSRVGPKRLSSGLKSSSFKVNATIISKKFQSSLNSK.

This sequence belongs to the AIM9 family.

The protein localises to the mitochondrion. In Debaryomyces hansenii (strain ATCC 36239 / CBS 767 / BCRC 21394 / JCM 1990 / NBRC 0083 / IGC 2968) (Yeast), this protein is Altered inheritance of mitochondria protein 9, mitochondrial (AIM9).